The following is a 651-amino-acid chain: MBT domain-containing protein 1 (651 aa).

The tract at residues Ser21–Leu55 is disordered. A compositionally biased stretch (low complexity) spans Asp29–Ser41. The segment at Pro68–Arg103 adopts an FCS-type zinc-finger fold. Residues Cys77, Cys80, Cys97, and Cys101 each contribute to the Zn(2+) site. MBT repeat units lie at residues Phe164–Pro268, Thr276–Arg373, Phe374–Pro479, and Phe487–Pro583. 2 disordered regions span residues Gln581–His610 and Thr629–Pro651. Residues Gln586–Ser596 are compositionally biased toward low complexity. Residues Lys597 to His610 are compositionally biased toward basic residues. Over residues Gln632–Gly643 the composition is skewed to polar residues.

Monomer. Component of the NuA4 histone acetyltransferase complex.

It is found in the nucleus. The protein resides in the chromosome. Chromatin reader component of the NuA4 histone acetyltransferase complex, a multiprotein complex involved in transcriptional activation of select genes principally by acetylation of nucleosomal histones H4 and H2A. The NuA4 complex plays a direct role in repair of DNA double-strand breaks (DSBs) by promoting homologous recombination (HR). MBTD1 specifically recognizes and binds monomethylated and dimethylated 'Lys-20' on histone H4 (H4K20me1 and H4K20me2, respectively). In the NuA4 complex, MBTD1 promotes recruitment of the complex to H4K20me marks by competing with TP53BP1 for binding to H4K20me. Following recruitment to H4K20me at DNA breaks, the NuA4 complex catalyzes acetylation of 'Lys-15' on histone H2A (H2AK15), blocking the ubiquitination mark required for TP53BP1 localization at DNA breaks, thereby promoting homologous recombination (HR). This is MBT domain-containing protein 1 from Xenopus tropicalis (Western clawed frog).